A 713-amino-acid polypeptide reads, in one-letter code: Polyribonucleotide nucleotidyltransferase (713 aa).

Mg(2+)-binding residues include Asp-493 and Asp-499. One can recognise a KH domain in the interval 560–619 (PRMITIKINPEKIRDVIGKGGSVIRALTEETGTTIDISDDGVVTIASTNSEGMAEAKKRI). Residues 629-697 (GHVYEGTVLK…EKGRVRLSAK (69 aa)) enclose the S1 motif domain.

Belongs to the polyribonucleotide nucleotidyltransferase family. Requires Mg(2+) as cofactor.

It localises to the cytoplasm. It carries out the reaction RNA(n+1) + phosphate = RNA(n) + a ribonucleoside 5'-diphosphate. Its function is as follows. Involved in mRNA degradation. Catalyzes the phosphorolysis of single-stranded polyribonucleotides processively in the 3'- to 5'-direction. The sequence is that of Polyribonucleotide nucleotidyltransferase from Burkholderia pseudomallei (strain 1106a).